The following is an 839-amino-acid chain: Toll-like receptor 4 (839 aa).

The N-terminal stretch at 1–23 is a signal peptide; sequence MMSASRLAGTLIPAMAFLSCVRP. The Extracellular segment spans residues 24–631; the sequence is ESWEPCVEVV…SLNITCQMNK (608 aa). Cys-29 and Cys-40 form a disulfide bridge. A glycan (N-linked (GlcNAc...) asparagine) is linked at Asn-35. LRR repeat units lie at residues 55–76, 79–100, 103–124, 127–148, and 151–172; these read STKN…SFFS, ELQV…AYQS, HLST…AFSG, SLQK…PIGH, and TLKE…EYFS. Asn-173 carries an N-linked (GlcNAc...) asparagine glycan. LRR repeat units lie at residues 176-199, 205-225, and 227-247; these read NLEH…RVLH, NLSL…AFKE, and RLHK…KTCI. Asn-205 carries an N-linked (GlcNAc...) asparagine glycan. A disulfide bridge connects residues Cys-281 and Cys-306. Residues Asn-282 and Asn-309 are each glycosylated (N-linked (GlcNAc...) asparagine). LRR repeat units lie at residues 331–351, 352–373, 374–394, 400–422, 423–444, 448–456, 472–495, 497–518, 521–542, and 545–565; these read GWQH…LKLK, SLKR…VDLP, SLEF…CSQS, SLKY…LGLE, QLEH…SVFL, NLIYLDISH, SLEV…FTEL, NLTF…AFNS, SLQV…PYKC, and SLQV…QELQ. Cys-390 and Cys-391 form a disulfide bridge. N-linked (GlcNAc...) asparagine glycosylation is found at Asn-497 and Asn-526. Residue Asn-575 is glycosylated (N-linked (GlcNAc...) asparagine). In terms of domain architecture, LRRCT spans 579-629; that stretch reads NDFACTCEHQSFLQWIKDQRQLLVEVERMECATPSDKQGMPVLSLNITCQM. Intrachain disulfides connect Cys-583/Cys-609 and Cys-585/Cys-627. N-linked (GlcNAc...) asparagine glycans are attached at residues Asn-624 and Asn-630. The helical transmembrane segment at 632–652 threads the bilayer; it reads TIIGVSVLSVLVVSVVAVLVY. Over 653-839 the chain is Cytoplasmic; that stretch reads KFYFHLMLLA…GCNWQEATSI (187 aa). The TIR domain occupies 672–815; sequence NIYDAFVIYS…IFWRRLRKAL (144 aa).

The protein belongs to the Toll-like receptor family. Belongs to the lipopolysaccharide (LPS) receptor, a multi-protein complex containing at least CD14, LY96 and TLR4. Binding to bacterial LPS leads to homodimerization. Interacts with LY96 via the extracellular domain. Interacts with MYD88 and TIRAP via their respective TIR domains. Interacts with NOX4. Interacts with CNPY3 and HSP90B1; this interaction is required for proper folding in the endoplasmic reticulum. Interacts with MAP3K21; this interaction leads to negative regulation of TLR4 signaling. Interacts with CD36, following CD36 stimulation by oxLDL or amyloid-beta 42, and forms a heterodimer with TLR6. The trimeric complex is internalized and triggers inflammatory response. LYN kinase activity facilitates TLR4-TLR6 heterodimerization and signal initiation. Interacts with TICAM1 in response to LPS in a WDFY1-dependent manner. Interacts with WDFY1 in response to LPS. Interacts with SMPDL3B. Interacts with CEACAM1; upon lipopolysaccharide stimulation, forms a complex including TLR4 and the phosphorylated form of SYK and CEACAM1, which in turn, recruits PTPN6 that dephosphorylates SYK, reducing the production of reactive oxygen species (ROS) and lysosome disruption, which in turn, reduces the activity of the inflammasome. Interacts with RFTN1; the interaction occurs in response to lipopolysaccharide stimulation. Interacts with SCIMP; the interaction occurs in response to lipopolysaccharide stimulation and is enhanced by phosphorylation of SCIMP by LYN. This interaction facilitates the phosphorylation of TLR4 by LYN which elicits a selective cytokine response in macrophages. Interacts with TRAF3IP3. Interacts with TREM1; this interaction enhances TLR4-mediated inflammatory response. Interacts with ZG16B/PAUF. Interacts with CD82; this interaction inhibits TLR4-mediated signaling pathway. In terms of processing, phosphorylated on tyrosine residues by LYN after binding lipopolysaccharide. Ubiquitinated by RNF128 via 'Lys-28'-linked polyubiquitin chains, leading to proteasomal degradation.

It is found in the cell membrane. The protein localises to the early endosome. Its subcellular location is the cell projection. The protein resides in the ruffle. Transmembrane receptor that functions as a pattern recognition receptor recognizing pathogen- and damage-associated molecular patterns (PAMPs and DAMPs) to induce innate immune responses via downstream signaling pathways. At the plasma membrane, cooperates with LY96 to mediate the innate immune response to bacterial lipopolysaccharide (LPS). Also involved in LPS-independent inflammatory responses triggered by free fatty acids, such as palmitate, and Ni(2+). Mechanistically, acts via MYD88, TIRAP and TRAF6, leading to NF-kappa-B activation, cytokine secretion and the inflammatory response. Alternatively, CD14-mediated TLR4 internalization via endocytosis is associated with the initiation of a MYD88-independent signaling via the TICAM1-TBK1-IRF3 axis leading to type I interferon production. In addition to the secretion of proinflammatory cytokines, initiates the activation of NLRP3 inflammasome and formation of a positive feedback loop between autophagy and NF-kappa-B signaling cascade. In complex with TLR6, promotes inflammation in monocytes/macrophages by associating with TLR6 and the receptor CD86. Upon ligand binding, such as oxLDL or amyloid-beta 42, the TLR4:TLR6 complex is internalized and triggers inflammatory response, leading to NF-kappa-B-dependent production of CXCL1, CXCL2 and CCL9 cytokines, via MYD88 signaling pathway, and CCL5 cytokine, via TICAM1 signaling pathway. In myeloid dendritic cells, vesicular stomatitis virus glycoprotein G but not LPS promotes the activation of IRF7, leading to type I IFN production in a CD14-dependent manner. The polypeptide is Toll-like receptor 4 (TLR4) (Pan paniscus (Pygmy chimpanzee)).